A 360-amino-acid chain; its full sequence is Chorismate synthase (360 aa).

NADP(+)-binding residues include arginine 48 and arginine 54. FMN-binding positions include 125–127 (RSS), 246–247 (NA), glycine 286, 301–305 (KPTSS), and arginine 327.

The protein belongs to the chorismate synthase family. Homotetramer. FMNH2 is required as a cofactor.

It carries out the reaction 5-O-(1-carboxyvinyl)-3-phosphoshikimate = chorismate + phosphate. The protein operates within metabolic intermediate biosynthesis; chorismate biosynthesis; chorismate from D-erythrose 4-phosphate and phosphoenolpyruvate: step 7/7. Catalyzes the anti-1,4-elimination of the C-3 phosphate and the C-6 proR hydrogen from 5-enolpyruvylshikimate-3-phosphate (EPSP) to yield chorismate, which is the branch point compound that serves as the starting substrate for the three terminal pathways of aromatic amino acid biosynthesis. This reaction introduces a second double bond into the aromatic ring system. The chain is Chorismate synthase from Actinobacillus succinogenes (strain ATCC 55618 / DSM 22257 / CCUG 43843 / 130Z).